The chain runs to 37 residues: Large ribosomal subunit protein bL36 (37 aa).

This sequence belongs to the bacterial ribosomal protein bL36 family.

This chain is Large ribosomal subunit protein bL36, found in Rhodococcus erythropolis (strain PR4 / NBRC 100887).